The primary structure comprises 313 residues: Protein-methionine-sulfoxide reductase catalytic subunit MsrP (313 aa).

Residues 1-44 (MARWRPDMAEREATPEALYLRRREFLALGAAGAVGLLVARGARA) constitute a signal peptide (tat-type signal). Mo-molybdopterin contacts are provided by residues Asn76, 79-80 (YE), Cys134, Thr169, Asn217, Arg222, and 233-235 (GAK).

It belongs to the MsrP family. Heterodimer of a catalytic subunit (MsrP) and a heme-binding subunit (MsrQ). Requires Mo-molybdopterin as cofactor. In terms of processing, predicted to be exported by the Tat system. The position of the signal peptide cleavage has not been experimentally proven.

It is found in the periplasm. The catalysed reaction is L-methionyl-[protein] + a quinone + H2O = L-methionyl-(S)-S-oxide-[protein] + a quinol. It catalyses the reaction L-methionyl-[protein] + a quinone + H2O = L-methionyl-(R)-S-oxide-[protein] + a quinol. Its function is as follows. Part of the MsrPQ system that repairs oxidized periplasmic proteins containing methionine sulfoxide residues (Met-O), using respiratory chain electrons. Thus protects these proteins from oxidative-stress damage caused by reactive species of oxygen and chlorine generated by the host defense mechanisms. MsrPQ is essential for the maintenance of envelope integrity under bleach stress, rescuing a wide series of structurally unrelated periplasmic proteins from methionine oxidation. The catalytic subunit MsrP is non-stereospecific, being able to reduce both (R-) and (S-) diastereoisomers of methionine sulfoxide. In Anaeromyxobacter sp. (strain K), this protein is Protein-methionine-sulfoxide reductase catalytic subunit MsrP.